A 130-amino-acid chain; its full sequence is MAIWQGRSLKKPSGGRIVLARKKRKRELGREPANTRVAEEREKRKIIRTYGGNRKVRLVEALYANVFEGGKGRKVKILNVVENPANRQYARRNIITKGAIIETEIGKAVVTSRPGQDGVVNAVLLKEENA.

Belongs to the eukaryotic ribosomal protein eS8 family. As to quaternary structure, part of the 30S ribosomal subunit.

The polypeptide is Small ribosomal subunit protein eS8 (Thermococcus gammatolerans (strain DSM 15229 / JCM 11827 / EJ3)).